An 811-amino-acid chain; its full sequence is Lon protease 1 (811 aa).

Residues leucine 15–isoleucine 212 enclose the Lon N-terminal domain. Glycine 376–threonine 383 lines the ATP pocket. The 182-residue stretch at tyrosine 613–leucine 794 folds into the Lon proteolytic domain. Active-site residues include serine 700 and lysine 743.

Belongs to the peptidase S16 family. Homohexamer. Organized in a ring with a central cavity.

Its subcellular location is the cytoplasm. It carries out the reaction Hydrolysis of proteins in presence of ATP.. In terms of biological role, ATP-dependent serine protease that mediates the selective degradation of mutant and abnormal proteins as well as certain short-lived regulatory proteins. Required for cellular homeostasis and for survival from DNA damage and developmental changes induced by stress. Degrades polypeptides processively to yield small peptide fragments that are 5 to 10 amino acids long. Binds to DNA in a double-stranded, site-specific manner. The sequence is that of Lon protease 1 from Sorangium cellulosum (strain So ce56) (Polyangium cellulosum (strain So ce56)).